A 230-amino-acid polypeptide reads, in one-letter code: Cytidylate kinase (230 aa).

12–20 (GPSGAGKGT) contributes to the ATP binding site.

This sequence belongs to the cytidylate kinase family. Type 1 subfamily.

The protein resides in the cytoplasm. The catalysed reaction is CMP + ATP = CDP + ADP. It carries out the reaction dCMP + ATP = dCDP + ADP. This is Cytidylate kinase from Shewanella loihica (strain ATCC BAA-1088 / PV-4).